The following is a 145-amino-acid chain: Small ribosomal subunit protein uS12A (145 aa).

At proline 64 the chain carries Hydroxyproline.

It belongs to the universal ribosomal protein uS12 family.

The protein is Small ribosomal subunit protein uS12A (RPS23A) of Naumovozyma castellii (Yeast).